A 446-amino-acid polypeptide reads, in one-letter code: Xanthone prenyltransferase A (446 aa).

8 residues coordinate dimethylallyl diphosphate: Arg113, Lys199, Tyr201, Arg263, Lys265, Tyr267, Tyr369, and Tyr440.

It belongs to the tryptophan dimethylallyltransferase family.

It participates in secondary metabolite biosynthesis. In terms of biological role, xanthone prenyltransferase involved in the conversion of monodictyphenone to the prenyl xanthones such as emericellin, shamixanthone and epishamixanthone. Monodictyphenone is first converted to variecoxanthone A via a paeciloxanthone intermediate by the consecutive actions of the FAD-dependent monooxygenase mdpD and the xanthone prenyltransferase xptB. XptB catalyzes regular O-prenylation at the hydroxy group of C-7 of the xanthone ring. Variecoxanthone A is further prenylated to emericellin by xptA before being reduced to shamixanthone and epishamixanthone by the dehydrogenase xptC. This is Xanthone prenyltransferase A from Emericella nidulans (strain FGSC A4 / ATCC 38163 / CBS 112.46 / NRRL 194 / M139) (Aspergillus nidulans).